We begin with the raw amino-acid sequence, 391 residues long: Polyketide synthase 1 (391 aa).

Cys-164 is a catalytic residue.

The protein belongs to the thiolase-like superfamily. Chalcone/stilbene synthases family. In terms of assembly, homodimer. As to expression, expressed in fruits.

The catalysed reaction is (E)-4-coumaroyl-CoA + 3 malonyl-CoA + 3 H(+) = 2',4,4',6'-tetrahydroxychalcone + 3 CO2 + 4 CoA. It participates in secondary metabolite biosynthesis; flavonoid biosynthesis. Functionally, polyketide synthase producing naringenin chalcone and slightly p-coumaryltriacetic acid lactone (CTAL). Can use p-coumaryl-CoA as substrate. This is Polyketide synthase 1 (PKS1) from Rubus idaeus (Raspberry).